Here is a 121-residue protein sequence, read N- to C-terminus: Small ribosomal subunit protein uS13 (121 aa).

The segment at H91–K121 is disordered. A compositionally biased stretch (basic residues) spans A106 to K121.

This sequence belongs to the universal ribosomal protein uS13 family. As to quaternary structure, part of the 30S ribosomal subunit. Forms a loose heterodimer with protein S19. Forms two bridges to the 50S subunit in the 70S ribosome.

Located at the top of the head of the 30S subunit, it contacts several helices of the 16S rRNA. In the 70S ribosome it contacts the 23S rRNA (bridge B1a) and protein L5 of the 50S subunit (bridge B1b), connecting the 2 subunits; these bridges are implicated in subunit movement. Contacts the tRNAs in the A and P-sites. In Bacillus cereus (strain G9842), this protein is Small ribosomal subunit protein uS13.